The primary structure comprises 370 residues: Probable protein phosphatase 2C 67 (370 aa).

Residues 35–344 (TFGEFSMAMI…DDITVIVVYL (310 aa)) form the PPM-type phosphatase domain. 4 residues coordinate Mn(2+): Asp77, Gly78, Asp276, and Asp335.

It belongs to the PP2C family. Interacts with SAUR19. Interacts with AHA2 at the plasma membrane. It depends on Mg(2+) as a cofactor. Mn(2+) serves as cofactor.

The protein resides in the cell membrane. The catalysed reaction is O-phospho-L-seryl-[protein] + H2O = L-seryl-[protein] + phosphate. It catalyses the reaction O-phospho-L-threonyl-[protein] + H2O = L-threonyl-[protein] + phosphate. Functionally, dephosphorylates and represses plasma membrane H(+)-ATPases (PM H(+)-ATPases, e.g. AHA1 and AHA2), thus influencing negatively plant growth and fitness. Promotes the apical hook maintenance of etiolated seedlings. The sequence is that of Probable protein phosphatase 2C 67 from Arabidopsis thaliana (Mouse-ear cress).